The chain runs to 613 residues: Alkyldihydroxyacetonephosphate synthase (613 aa).

Residues Ile126 to Leu307 enclose the FAD-binding PCMH-type domain. FAD contacts are provided by residues Pro158 to Asn164, Asp228 to Thr234, Ala241 to Ser244, and Glu291 to Val297. Substrate is bound at residue Arg437. Tyr498 serves as the catalytic Proton donor/acceptor. Residues His534–His536 are important for enzyme activity. Residues Asn572 to Arg593 are disordered. The short motif at Ala611–Leu613 is the Microbody targeting signal element.

It belongs to the FAD-binding oxidoreductase/transferase type 4 family. Homodimer. It depends on FAD as a cofactor.

The protein resides in the peroxisome. It carries out the reaction a long chain fatty alcohol + a 1-acylglycerone 3-phosphate = a 1-O-alkylglycerone 3-phosphate + a long-chain fatty acid + H(+). Its pathway is glycerolipid metabolism; ether lipid biosynthesis. Functionally, catalyzes the exchange of an acyl for a long-chain alkyl group and the formation of the ether bond in the biosynthesis of ether phospholipids. The chain is Alkyldihydroxyacetonephosphate synthase from Trypanosoma brucei brucei.